Reading from the N-terminus, the 682-residue chain is NAD(+)--arginine ADP-ribosyltransferase (682 aa).

One can recognise a TR mART core domain in the interval 383–614 (KIIRRELRGY…KLIQAEVMTT (232 aa)). Residues arginine 478, serine 503, and glutamate 576 contribute to the active site.

Belongs to the Tevenvirinae NAD(+)--arginine ADP-ribosyltransferase family. Proteolytic cleavages at the N- and C-termini by the prohead core protein protease give rise to the mature enzyme.

The protein localises to the virion. The catalysed reaction is L-arginyl-[protein] + NAD(+) = N(omega)-(ADP-D-ribosyl)-L-arginyl-[protein] + nicotinamide + H(+). Functionally, ADP-ribosyltransferase that efficiently ADP-ribosylates one of the two alpha subunits of host RNA polymerase RPOA on an arginine located in the C-terminal region. ADP-ribosylation of RPOA alpha subunit enhances the transcription of viral early genes. Also ribosylates RPOA subunits beta, beta' and sigma 70 and performs an autoribosylation reaction. Additional in-vitro identified targets include proteins involved in either translation or cellular metabolism such as elongation factor-Tu or GroeL. Mono-ADP-ribosylates host MAZF which may inactivate the latter. This Escherichia coli (Bacteriophage T4) protein is NAD(+)--arginine ADP-ribosyltransferase (alt).